The sequence spans 152 residues: Probable flagellum biosynthesis repressor protein FlbT (152 aa).

It belongs to the FlbT family.

Its function is as follows. Has a post-transcriptional repressor function in flagellum biogenesis. Associates with the 5'-UTR of fljK mRNA and promotes its degradation. The sequence is that of Probable flagellum biosynthesis repressor protein FlbT from Brucella anthropi (strain ATCC 49188 / DSM 6882 / CCUG 24695 / JCM 21032 / LMG 3331 / NBRC 15819 / NCTC 12168 / Alc 37) (Ochrobactrum anthropi).